A 186-amino-acid chain; its full sequence is Peptidyl-tRNA hydrolase (186 aa).

Position 14 (Tyr14) interacts with tRNA. The Proton acceptor role is filled by His19. Positions 61, 63, and 107 each coordinate tRNA.

It belongs to the PTH family. As to quaternary structure, monomer.

Its subcellular location is the cytoplasm. The enzyme catalyses an N-acyl-L-alpha-aminoacyl-tRNA + H2O = an N-acyl-L-amino acid + a tRNA + H(+). Functionally, hydrolyzes ribosome-free peptidyl-tRNAs (with 1 or more amino acids incorporated), which drop off the ribosome during protein synthesis, or as a result of ribosome stalling. Its function is as follows. Catalyzes the release of premature peptidyl moieties from peptidyl-tRNA molecules trapped in stalled 50S ribosomal subunits, and thus maintains levels of free tRNAs and 50S ribosomes. The polypeptide is Peptidyl-tRNA hydrolase (Helicobacter acinonychis (strain Sheeba)).